We begin with the raw amino-acid sequence, 240 residues long: Serine protease SplB (240 aa).

The N-terminal stretch at 1-36 is a signal peptide; the sequence is MNKNVVIKSLATLTILTSVAGIGTTLVEEVQQTAKA. Catalysis depends on charge relay system residues H75, D113, and S193.

The protein belongs to the peptidase S1B family.

The protein localises to the secreted. In terms of biological role, serine protease that cleaves specifically after the sequence Trp-Glu-Leu-Gln. This is Serine protease SplB (splB) from Staphylococcus aureus (strain bovine RF122 / ET3-1).